The chain runs to 533 residues: uncharacterized protein (533 aa).

5 consecutive transmembrane segments (helical) span residues Phe-4–Ile-23, Val-28–Thr-47, Ile-57–Phe-79, Gly-86–Ile-108, and Val-151–Ala-173. The RCK C-terminal domain occupies Leu-263 to Asp-347. Transmembrane regions (helical) follow at residues Leu-352–Pro-374, Gly-379–Leu-401, Leu-422–Thr-444, and Gly-454–Leu-476.

Belongs to the AAE transporter (TC 2.A.81) family.

It localises to the cell membrane. This is an uncharacterized protein from Corynebacterium glutamicum (strain ATCC 13032 / DSM 20300 / JCM 1318 / BCRC 11384 / CCUG 27702 / LMG 3730 / NBRC 12168 / NCIMB 10025 / NRRL B-2784 / 534).